The sequence spans 304 residues: Probable UDP-3-O-acylglucosamine N-acyltransferase 2, mitochondrial (304 aa).

Residues methionine 1–glutamine 47 constitute a mitochondrion transit peptide. A UDP-N-acetyl-alpha-D-glucosamine-binding site is contributed by phenylalanine 159–phenylalanine 161. Hexadecanoate is bound by residues aspartate 209 and glutamine 213. Histidine 216 serves as the catalytic Proton acceptor. 3 residues coordinate UDP-N-acetyl-alpha-D-glucosamine: asparagine 217, serine 235, and histidine 253.

This sequence belongs to the transferase hexapeptide repeat family. LpxD subfamily. Homotrimer.

Its subcellular location is the mitochondrion. The enzyme catalyses a UDP-3-O-[(3R)-3-hydroxyacyl]-alpha-D-glucosamine + a (3R)-hydroxyacyl-[ACP] = a UDP-2-N,3-O-bis[(3R)-3-hydroxyacyl]-alpha-D-glucosamine + holo-[ACP] + H(+). It participates in glycolipid biosynthesis; lipid IV(A) biosynthesis; lipid IV(A) from (3R)-3-hydroxytetradecanoyl-[acyl-carrier-protein] and UDP-N-acetyl-alpha-D-glucosamine: step 3/6. Functionally, involved in the biosynthesis of lipid A, a phosphorylated glycolipid that in bacteria anchors the lipopolysaccharide to the outer membrane of the cell. Lipid A-like molecules in plants may serve as structural components of the outer membranes of mitochondria and/or chloroplasts, or may be involved in signal transduction or plant defense responses. The polypeptide is Probable UDP-3-O-acylglucosamine N-acyltransferase 2, mitochondrial (LPXD2) (Arabidopsis thaliana (Mouse-ear cress)).